Here is a 461-residue protein sequence, read N- to C-terminus: L-cystine uptake protein TcyP (461 aa).

A run of 10 helical transmembrane segments spans residues 1-21 (MTLF…LLYM), 33-53 (VFTA…IYGS), 72-92 (YVKL…LGAF), 104-124 (ISGL…AVGI), 183-203 (PTST…YLGV), 224-244 (IIMR…LAIM), 262-282 (FVIA…LLIT), 337-357 (LSIG…IMIA), 369-389 (FLFT…GVGG), and 393-413 (FAAL…GLLI).

It belongs to the dicarboxylate/amino acid:cation symporter (DAACS) (TC 2.A.23) family.

Its subcellular location is the membrane. Mediates uptake of L-cystine, the oxidized form of L-cysteine. The protein is L-cystine uptake protein TcyP (tcyP) of Bacillus licheniformis (strain ATCC 14580 / DSM 13 / JCM 2505 / CCUG 7422 / NBRC 12200 / NCIMB 9375 / NCTC 10341 / NRRL NRS-1264 / Gibson 46).